The following is a 363-amino-acid chain: tRNA dimethylallyltransferase (363 aa).

65-72 contacts ATP; the sequence is GPTASGKS. Residue 67-72 participates in substrate binding; it reads TASGKS. Interaction with substrate tRNA stretches follow at residues 90–93 and 214–218; these read DSMQ and QRLIR.

This sequence belongs to the IPP transferase family. As to quaternary structure, monomer. Mg(2+) serves as cofactor.

The enzyme catalyses adenosine(37) in tRNA + dimethylallyl diphosphate = N(6)-dimethylallyladenosine(37) in tRNA + diphosphate. Catalyzes the transfer of a dimethylallyl group onto the adenine at position 37 in tRNAs that read codons beginning with uridine, leading to the formation of N6-(dimethylallyl)adenosine (i(6)A). This chain is tRNA dimethylallyltransferase, found in Rickettsia rickettsii (strain Sheila Smith).